A 392-amino-acid polypeptide reads, in one-letter code: Cyclic di-GMP phosphodiesterase RocR (392 aa).

Residues 5–126 enclose the Response regulatory domain; sequence NVLVLEDEPF…RITALLTRYN (122 aa). Position 56 is a 4-aspartylphosphate (Asp56). The EAL domain maps to 140 to 392; it reads ELPSVADVVR…QHFLDYCSGS (253 aa). Residues Glu175, Asn233, Glu265, and Asp295 each contribute to the Mg(2+) site. The Proton acceptor role is filled by Glu352.

Homotetramer. Exhibits a highly unusual tetrameric structure arranged around a single dyad, with the four subunits adopting two distinctly different conformations, with only two active sites accessible for substrate binding. Interacts with RocS1. Requires Mg(2+) as cofactor.

It carries out the reaction 3',3'-c-di-GMP + H2O = 5'-phosphoguanylyl(3'-&gt;5')guanosine + H(+). With respect to regulation, phosphorylation of Asp-56 probably induces local conformational changes in the response regulatory domain. These structural changes are transmitted to the adjacent EAL domain, then the signal is further transmitted down to the active site. The phosphodiesterase activity is inhibited by Ca(2+) and Zn(2+). Phosphodiesterase activity is inhibited by a benzoisothiazolinone derivative that specifically inhibited RocR, but not some other phosphodiesterases. In terms of biological role, phosphodiesterase (PDE) that catalyzes the hydrolysis of cyclic diguanylate (c-di-GMP) to 5'-pGpG. Cannot use cyclic AMP or cyclic GMP. Part of the RocSAR two-component regulatory signaling system (also known as the SadARS system), which regulates biofilm maturation, type III secretion and expression of the cup fimbrial-gene cluster. Negatively regulates the expression of cup genes by antagonizing the activity of RocA1. The polypeptide is Cyclic di-GMP phosphodiesterase RocR (Pseudomonas aeruginosa (strain ATCC 15692 / DSM 22644 / CIP 104116 / JCM 14847 / LMG 12228 / 1C / PRS 101 / PAO1)).